A 365-amino-acid chain; its full sequence is tRNA N6-adenosine threonylcarbamoyltransferase (365 aa).

Fe cation is bound by residues His119 and His123. Substrate contacts are provided by residues Leu141–Gly145, Asp174, Gly187, and Asn289. Asp317 contributes to the Fe cation binding site. A disordered region spans residues Ala342–Ala365.

Belongs to the KAE1 / TsaD family. Fe(2+) serves as cofactor.

The protein resides in the cytoplasm. It carries out the reaction L-threonylcarbamoyladenylate + adenosine(37) in tRNA = N(6)-L-threonylcarbamoyladenosine(37) in tRNA + AMP + H(+). In terms of biological role, required for the formation of a threonylcarbamoyl group on adenosine at position 37 (t(6)A37) in tRNAs that read codons beginning with adenine. Is involved in the transfer of the threonylcarbamoyl moiety of threonylcarbamoyl-AMP (TC-AMP) to the N6 group of A37, together with TsaE and TsaB. TsaD likely plays a direct catalytic role in this reaction. The protein is tRNA N6-adenosine threonylcarbamoyltransferase of Roseobacter denitrificans (strain ATCC 33942 / OCh 114) (Erythrobacter sp. (strain OCh 114)).